Reading from the N-terminus, the 299-residue chain is Phosphoribosylaminoimidazole-succinocarboxamide synthase (299 aa).

This sequence belongs to the SAICAR synthetase family.

It carries out the reaction 5-amino-1-(5-phospho-D-ribosyl)imidazole-4-carboxylate + L-aspartate + ATP = (2S)-2-[5-amino-1-(5-phospho-beta-D-ribosyl)imidazole-4-carboxamido]succinate + ADP + phosphate + 2 H(+). The protein operates within purine metabolism; IMP biosynthesis via de novo pathway; 5-amino-1-(5-phospho-D-ribosyl)imidazole-4-carboxamide from 5-amino-1-(5-phospho-D-ribosyl)imidazole-4-carboxylate: step 1/2. In Desulfatibacillum aliphaticivorans, this protein is Phosphoribosylaminoimidazole-succinocarboxamide synthase.